Reading from the N-terminus, the 224-residue chain is Cysteine-rich hydrophobic domain-containing protein 1 (224 aa).

Positions 1 to 80 (MSILLPNMAE…PPPRVVSEEH (80 aa)) are disordered. Over residues 13-25 (TISELEEEEEEEA) the composition is skewed to acidic residues. The segment covering 26–40 (ATSSSSPSSSSSVSG) has biased composition (low complexity). The segment covering 41–69 (PDDDEEDEEEEEEEEEEEEEEEEEEEEEA) has biased composition (acidic residues). Positions 42–70 (DDDEEDEEEEEEEEEEEEEEEEEEEEEAP) form a coiled coil.

It belongs to the CHIC family. In terms of processing, palmitoylated. Equally expressed in various parts of the brain.

The protein localises to the cell membrane. Its subcellular location is the cytoplasmic vesicle. In Homo sapiens (Human), this protein is Cysteine-rich hydrophobic domain-containing protein 1 (CHIC1).